A 61-amino-acid chain; its full sequence is Large ribosomal subunit protein bL32 (61 aa).

The interval 1 to 44 (MAVQQNRKSRSRRDMRRSHDALTENALTVDQTTGETHRRHHVTK) is disordered. Residues 7-16 (RKSRSRRDMR) are compositionally biased toward basic residues. Positions 25–34 (NALTVDQTTG) are enriched in polar residues.

This sequence belongs to the bacterial ribosomal protein bL32 family.

The polypeptide is Large ribosomal subunit protein bL32 (Acinetobacter baylyi (strain ATCC 33305 / BD413 / ADP1)).